The following is a 354-amino-acid chain: 3-isopropylmalate dehydrogenase (354 aa).

76-87 lines the NAD(+) pocket; that stretch reads GPRWDSAKERPE. 4 residues coordinate substrate: Arg94, Arg104, Arg130, and Asp215. Residues Asp215, Asp239, and Asp243 each coordinate Mg(2+). 273–285 provides a ligand contact to NAD(+); sequence GSAPDIAGKNKAN.

The protein belongs to the isocitrate and isopropylmalate dehydrogenases family. LeuB type 1 subfamily. Homodimer. The cofactor is Mg(2+). Mn(2+) is required as a cofactor.

It is found in the cytoplasm. It catalyses the reaction (2R,3S)-3-isopropylmalate + NAD(+) = 4-methyl-2-oxopentanoate + CO2 + NADH. Its pathway is amino-acid biosynthesis; L-leucine biosynthesis; L-leucine from 3-methyl-2-oxobutanoate: step 3/4. Its function is as follows. Catalyzes the oxidation of 3-carboxy-2-hydroxy-4-methylpentanoate (3-isopropylmalate) to 3-carboxy-4-methyl-2-oxopentanoate. The product decarboxylates to 4-methyl-2 oxopentanoate. The chain is 3-isopropylmalate dehydrogenase from Bacillus cereus (strain ATCC 14579 / DSM 31 / CCUG 7414 / JCM 2152 / NBRC 15305 / NCIMB 9373 / NCTC 2599 / NRRL B-3711).